The sequence spans 893 residues: MATEEFIIRIPPYHYIHVLDQNSNVSRVEVGPKTYIRQDNERVLFAPMRMVTVPPRHYCTVANPVSRDAQGLVLFDVTGQVRLRHADLEIRLAQDPFPLYPGEVLEKDITPLQVVLPNTALHLKALLDFEDKDGDKVVAGDEWLFEGPGTYIPRKEVEVVEIIQATIIRQNQALRLRARKECWDRDGKERVTGEEWLVTTVGAYLPAVFEEVLDLVDAVILTEKTALHLRARRNFRDFRGVSRRTGEEWLVTVQDTEAHVPDVHEEVLGVVPITTLGPHNYCVILDPVGPDGKNQLGQKRVVKGEKSFFLQPGEQLEQGIQDVYVLSEQQGLLLRALQPLEEGEDEEKVSHQAGDHWLIRGPLEYVPSAKVEVVEERQAIPLDENEGIYVQDVKTGKVRAVIGSTYMLTQDEVLWEKELPPGVEELLNKGQDPLADRGEKDTAKSLQPLAPRNKTRVVSYRVPHNAAVQVYDYREKRARVVFGPELVSLGPEEQFTVLSLSAGRPKRPHARRALCLLLGPDFFTDVITIETADHARLQLQLAYNWHFEVNDRKDPQETAKLFSVPDFVGDACKAIASRVRGAVASVTFDDFHKNSARIIRTAVFGFETSEAKGPDGMALPRPRDQAVFPQNGLVVSSVDVQSVEPVDQRTRDALQRSVQLAIEITTNSQEAAAKHEAQRLEQEARGRLERQKILDQSEAEKARKELLELEALSMAVESTGTAKAEAESRAEAARIEGEGSVLQAKLKAQALAIETEAELQRVQKVRELELVYARAQLELEVSKAQQLAEVEVKKFKQMTEAIGPSTIRDLAVAGPEMQVKLLQSLGLKSTLITDGSTPINLFNTAFGLLGMGPEGQPLGRRVASGPSPGEGISPQSAQAPQAPGDNHVVPVLR.

An N-acetylalanine modification is found at A2. MVP repeat units lie at residues 2 to 56 (ATEE…VPPR), 57 to 111 (HYCT…DITP), 112 to 164 (LQVV…EIIQ), 165 to 217 (ATII…DLVD), 218 to 272 (AVIL…GVVP), 273 to 323 (ITTL…IQDV), 324 to 379 (YVLS…ERQA), 380 to 457 (IPLD…KTRV), and 458 to 520 (VSYR…LLGP). Residue K444 forms a Glycyl lysine isopeptide (Lys-Gly) (interchain with G-Cter in SUMO2) linkage. Phosphoserine is present on S445. K704 is covalently cross-linked (Glycyl lysine isopeptide (Lys-Gly) (interchain with G-Cter in SUMO2)). The interval 856–893 (QPLGRRVASGPSPGEGISPQSAQAPQAPGDNHVVPVLR) is disordered.

In terms of assembly, the vault ribonucleoprotein particle is a huge (400 A x 670 A) cage structure of 12.9 MDa. It consists of a dimer of half-vaults, with each half-vault comprising 39 identical major vault protein (MVP) chains, PARP4 and one or more vault RNAs (vRNAs). Interacts with TEP1. Interacts with PTEN and activated MAPK1. The phosphorylated protein interacts with the SH2 domains of PTPN11 and SRC. Interacts with APEX1. May interact with ZNF540. Post-translationally, phosphorylated on Tyr residues after EGF stimulation. In terms of processing, dephosphorylated by PTPN11. Present in most normal tissues. Higher expression observed in epithelial cells with secretory and excretory functions, as well as in cells chronically exposed to xenobiotics, such as bronchial cells and cells lining the intestine. Overexpressed in many multidrug-resistant cancer cells.

The protein localises to the cytoplasm. The protein resides in the nucleus. It is found in the nuclear pore complex. Its subcellular location is the perinuclear region. Required for normal vault structure. Vaults are multi-subunit structures that may act as scaffolds for proteins involved in signal transduction. Vaults may also play a role in nucleo-cytoplasmic transport. Down-regulates IFNG-mediated STAT1 signaling and subsequent activation of JAK. Down-regulates SRC activity and signaling through MAP kinases. This is Major vault protein (MVP) from Homo sapiens (Human).